Here is a 315-residue protein sequence, read N- to C-terminus: Gamma-hemolysin component C (315 aa).

The first 29 residues, 1–29 (MLKNKILATTLSVSLLAPLANPLLENAKA), serve as a signal peptide directing secretion.

It belongs to the aerolysin family. Toxicity requires sequential binding and synergistic association of a class S and a class F component which form heterooligomeric complexes. HlgC (class S) associates with HlgB (class F) thus forming an CB toxin.

Functionally, toxin that seems to act by forming pores in the membrane of the cell. Has a hemolytic and a leucotoxic activity. This Staphylococcus aureus (strain MRSA252) protein is Gamma-hemolysin component C (hlgC).